The chain runs to 778 residues: Melanoma-associated antigen D1 (778 aa).

3 disordered regions span residues 41–60, 78–123, and 182–333; these read PTNQATAAASPQSSQPPTAN, FKVQ…KGPN, and KAWN…PAWQ. Y92 is modified (phosphotyrosine). Polar residues-rich tracts occupy residues 104–118, 185–211, 225–240, 253–263, and 300–319; these read PNTQPKAAFKSQNAT, NDTTKAPTADTQTQNVNQAKMATSQAD, TAQTSADGSQAQNLES, NNLNVEENSSG, and LAWQNPSGWQNQTARQTPPA. Tandem repeats lie at residues 296-301, 302-307, 308-313, 332-337, 338-343, 344-349, 350-355, 356-361, 362-367, 368-373, 374-379, 380-385, 386-391, 392-397, 398-403, 404-409, 410-415, 416-421, and 422-427. A 22 X 6 AA tandem repeats of W-[PQ]-X-P-X-X region spans residues 296–444; the sequence is WQTPLAWQNP…IPPDWQNLRP (149 aa). The tract at residues 376-412 is disordered; it reads NPPGWQTPPGWQTPPGWQGPPDWQGPPDWPLPPDWPL. Positions 377–397 are enriched in low complexity; sequence PPGWQTPPGWQTPPGWQGPPD. Over residues 398-412 the composition is skewed to pro residues; that stretch reads WQGPPDWPLPPDWPL. A 20; approximate repeat occupies 428–432; sequence WIPAD. 2 tandem repeats follow at residues 433–438 and 439–444. The segment covering 440 to 455 has biased composition (low complexity); sequence QNLRPSPNLRPSPNSR. The disordered stretch occupies residues 440–466; it reads QNLRPSPNLRPSPNSRASQNPGAAQPR. Residues 471 to 669 form the MAGE domain; sequence LQERANKLVK…RDWTAQFMEA (199 aa).

As to quaternary structure, interacts with DLX5, DLX7 and MSX2 and forms homomultimers. Interacts with UNC5A. Interacts with TRIM28 and PJA1. Interacts with NGFR/p75NTR and RORA. Expressed in bone marrow stromal cells from both multiple myeloma patients and healthy donors. Seems to be ubiquitously expressed.

The protein localises to the cytoplasm. The protein resides in the cell membrane. It localises to the nucleus. Functionally, involved in the apoptotic response after nerve growth factor (NGF) binding in neuronal cells. Inhibits cell cycle progression, and facilitates NGFR-mediated apoptosis. May act as a regulator of the function of DLX family members. May enhance ubiquitin ligase activity of RING-type zinc finger-containing E3 ubiquitin-protein ligases. Proposed to act through recruitment and/or stabilization of the Ubl-conjugating enzyme (E2) at the E3:substrate complex. Plays a role in the circadian rhythm regulation. May act as RORA co-regulator, modulating the expression of core clock genes such as BMAL1 and NFIL3, induced, or NR1D1, repressed. The chain is Melanoma-associated antigen D1 (MAGED1) from Homo sapiens (Human).